We begin with the raw amino-acid sequence, 202 residues long: Small ribosomal subunit protein uS4c (202 aa).

The 62-residue stretch at 90–151 (MRLDNTIFRL…KQKSRFIITK (62 aa)) folds into the S4 RNA-binding domain.

The protein belongs to the universal ribosomal protein uS4 family. Part of the 30S ribosomal subunit. Contacts protein S5. The interaction surface between S4 and S5 is involved in control of translational fidelity.

The protein localises to the plastid. Its subcellular location is the chloroplast. Functionally, one of the primary rRNA binding proteins, it binds directly to 16S rRNA where it nucleates assembly of the body of the 30S subunit. In terms of biological role, with S5 and S12 plays an important role in translational accuracy. This is Small ribosomal subunit protein uS4c (rps4) from Plagiochila adianthoides (Liverwort).